A 455-amino-acid polypeptide reads, in one-letter code: UPF0053 protein MT1890 (455 aa).

The 204-residue stretch at Asn2–Thr205 folds into the CNNM transmembrane domain. A run of 4 helical transmembrane segments spans residues Thr6–Ala26, Leu68–Leu88, Leu106–Val126, and Leu148–Val168. CBS domains are found at residues Met224–Leu285 and Leu286–Glu346.

The protein belongs to the UPF0053 family.

It localises to the cell membrane. In Mycobacterium tuberculosis (strain CDC 1551 / Oshkosh), this protein is UPF0053 protein MT1890.